Reading from the N-terminus, the 77-residue chain is Translation initiation factor IF-1, chloroplastic (77 aa).

In terms of domain architecture, S1-like spans 1-71; that stretch reads MKEQKLIHEG…TKGRIIYRLR (71 aa).

Belongs to the IF-1 family. As to quaternary structure, component of the 30S ribosomal translation pre-initiation complex which assembles on the 30S ribosome in the order IF-2 and IF-3, IF-1 and N-formylmethionyl-tRNA(fMet); mRNA recruitment can occur at any time during PIC assembly.

It localises to the plastid. It is found in the chloroplast. Its function is as follows. One of the essential components for the initiation of protein synthesis. Stabilizes the binding of IF-2 and IF-3 on the 30S subunit to which N-formylmethionyl-tRNA(fMet) subsequently binds. Helps modulate mRNA selection, yielding the 30S pre-initiation complex (PIC). Upon addition of the 50S ribosomal subunit IF-1, IF-2 and IF-3 are released leaving the mature 70S translation initiation complex. In Drimys granadensis, this protein is Translation initiation factor IF-1, chloroplastic.